Consider the following 314-residue polypeptide: MTSTRYEGDTWDLASSVGVTATMVAAARAMATRADNPLINDLFAEPLVKAVGVDLLSRLAGGELDPAELNDVHDGAAGSAGAMSRMADNMAVRTKFFDEFFLNATKAGIAQVVILASGLDARAYRLAWPAGTVVYEVDQPQVIDFKTTALAQLGAAPTAERRVVAVDLRDDWPAALRAAGFDPARPTAWSAEGLLGYLPPEAQDRLLDTITELSAPGSRLATESAPNPAPGEEEKLKERMQAISQRWRAHGFDLDMAGLVYFGERNEAAPYLAGHGWRLNSVTIRDLFAANGLDPLDDDDTRMGEMLYTWGIYE.

Residues Asp-138 and 167 to 168 (DL) each bind S-adenosyl-L-methionine.

The protein belongs to the UPF0677 family.

Functionally, exhibits S-adenosyl-L-methionine-dependent methyltransferase activity. This is Putative S-adenosyl-L-methionine-dependent methyltransferase MAP_4191c from Mycolicibacterium paratuberculosis (strain ATCC BAA-968 / K-10) (Mycobacterium paratuberculosis).